Consider the following 447-residue polypeptide: GTPase Der (447 aa).

2 EngA-type G domains span residues 4-165 and 180-357; these read KIIA…PEEE and LQIV…KIWN. Residues 10 to 17, 57 to 61, 119 to 122, 186 to 193, 233 to 237, and 298 to 301 each bind GTP; these read GRPNVGKS, DTPGL, NKCE, GRPNAGKS, DTAGL, and NKWD. The 86-residue stretch at 358 to 443 folds into the KH-like domain; the sequence is KKIATSKLNE…PIRFTYVKTK (86 aa).

The protein belongs to the TRAFAC class TrmE-Era-EngA-EngB-Septin-like GTPase superfamily. EngA (Der) GTPase family. As to quaternary structure, associates with the 50S ribosomal subunit.

GTPase that plays an essential role in the late steps of ribosome biogenesis. The polypeptide is GTPase Der (Rickettsia akari (strain Hartford)).